The primary structure comprises 802 residues: Exocyst complex component 6 (802 aa).

This sequence belongs to the SEC15 family. The exocyst complex is composed of EXOC1, EXOC2, EXOC3, EXOC4, EXOC5, EXOC6, EXOC7 and EXOC8. Interacts with CNTRL. Interacts with RAB11A in a GTP-dependent manner.

It is found in the cytoplasm. The protein resides in the perinuclear region. The protein localises to the cell projection. It localises to the growth cone. Its subcellular location is the midbody. It is found in the midbody ring. Its function is as follows. Component of the exocyst complex involved in the docking of exocytic vesicles with fusion sites on the plasma membrane. Together with RAB11A, RAB3IP, RAB8A, PARD3, PRKCI, ANXA2, CDC42 and DNMBP promotes transcytosis of PODXL to the apical membrane initiation sites (AMIS), apical surface formation and lumenogenesis. The polypeptide is Exocyst complex component 6 (Exoc6) (Mus musculus (Mouse)).